Here is a 551-residue protein sequence, read N- to C-terminus: RCC1 and BTB domain-containing protein 2 (551 aa).

6 RCC1 repeats span residues 64–115 (NDEI…VLAT), 117–169 (DGEV…VLTS), 171–222 (GEVF…AVVD), 223–274 (TGEV…VLTD), 276–326 (GQIY…AAKS), and 328–382 (GGHV…TVAE). The 64-residue stretch at 394 to 457 (ADLKFLVDGK…LYTDNISLPP (64 aa)) folds into the BTB domain.

It localises to the cytoplasmic vesicle. It is found in the secretory vesicle. Its subcellular location is the acrosome. This is RCC1 and BTB domain-containing protein 2 (Rcbtb2) from Rattus norvegicus (Rat).